We begin with the raw amino-acid sequence, 296 residues long: Sulfotransferase 1B1 (296 aa).

3'-phosphoadenylyl sulfate is bound at residue 48–53 (KSGTTW). 107-109 (KTH) serves as a coordination point for substrate. Catalysis depends on H109, which acts as the Proton acceptor. Residues R131, S139, Y194, 228–233 (TSFEMM), and 258–260 (RKG) contribute to the 3'-phosphoadenylyl sulfate site.

It belongs to the sulfotransferase 1 family. Expressed highly in the colon, kidney and small intestine of male and female dogs. Highly expressed in the jejunum and ileum of the male dog than the female dog, which displayed more expression in duodenum (at protein level).

It localises to the cytoplasm. It carries out the reaction a phenol + 3'-phosphoadenylyl sulfate = an aryl sulfate + adenosine 3',5'-bisphosphate + H(+). The enzyme catalyses 3,3',5-triiodo-L-thyronine + 3'-phosphoadenylyl sulfate = 3,3',5-triiodo-L-thyronine sulfate + adenosine 3',5'-bisphosphate + H(+). The catalysed reaction is 3,3',5'-triiodo-L-thyronine + 3'-phosphoadenylyl sulfate = 3,3',5'-triiodo-L-thyronine sulfate + adenosine 3',5'-bisphosphate + H(+). It catalyses the reaction 3,3'-diiodo-L-thyronine + 3'-phosphoadenylyl sulfate = 3,3'-diiodo-L-thyronine sulfate + adenosine 3',5'-bisphosphate + H(+). It carries out the reaction 4-ethylphenol + 3'-phosphoadenylyl sulfate = 4-ethylphenyl sulfate + adenosine 3',5'-bisphosphate + H(+). Its function is as follows. Sulfotransferase that utilizes 3'-phospho-5'-adenylyl sulfate (PAPS) as sulfonate donor to catalyze the sulfate conjugation of dopamine, small phenols such as 1-naphthol and p-nitrophenol and thyroid hormones, including 3,3'-diiodothyronine, triidothyronine (T3) and reverse triiodothyronine (rT3). May play a role in gut microbiota-host metabolic interaction. O-sulfonates 4-ethylphenol (4-EP), a dietary tyrosine-derived metabolite produced by gut bacteria. The product 4-EPS crosses the blood-brain barrier and may negatively regulate oligodendrocyte maturation and myelination, affecting the functional connectivity of different brain regions associated with the limbic system. This chain is Sulfotransferase 1B1 (SULT1B1), found in Canis lupus familiaris (Dog).